A 329-amino-acid polypeptide reads, in one-letter code: 1-phosphatidylinositol phosphodiesterase (329 aa).

An N-terminal signal peptide occupies residues 1 to 31; the sequence is MSNKKLILKLFICSTIFITFVFALHDKRVVA. Positions 51–194 constitute a PI-PLC X-box domain; it reads NIPLARISIP…ARGKIVLLKR (144 aa). The active-site Proton acceptor is histidine 63. Residue histidine 113 is the Proton donor of the active site.

The protein resides in the secreted. The catalysed reaction is a 1,2-diacyl-sn-glycero-3-phospho-(1D-myo-inositol) = 1D-myo-inositol 1,2-cyclic phosphate + a 1,2-diacyl-sn-glycerol. Functionally, cleaves glycosylphosphatidylinositol (GPI) and phosphatidylinositol (PI) anchors but not PI phosphates. This Bacillus thuringiensis protein is 1-phosphatidylinositol phosphodiesterase.